A 355-amino-acid chain; its full sequence is N-acetyl-gamma-glutamyl-phosphate reductase (355 aa).

Residue cysteine 152 is part of the active site.

It belongs to the NAGSA dehydrogenase family. Type 1 subfamily.

Its subcellular location is the cytoplasm. It catalyses the reaction N-acetyl-L-glutamate 5-semialdehyde + phosphate + NADP(+) = N-acetyl-L-glutamyl 5-phosphate + NADPH + H(+). It participates in amino-acid biosynthesis; L-arginine biosynthesis; N(2)-acetyl-L-ornithine from L-glutamate: step 3/4. In terms of biological role, catalyzes the NADPH-dependent reduction of N-acetyl-5-glutamyl phosphate to yield N-acetyl-L-glutamate 5-semialdehyde. The protein is N-acetyl-gamma-glutamyl-phosphate reductase of Psychrobacter sp. (strain PRwf-1).